The primary structure comprises 2225 residues: Multifunctional protein pyr1-3 (2225 aa).

M1 is modified (N-acetylmethionine). Residues 40-390 (MVGYNESISD…NVCGEQQHKS (351 aa)) are GATase (Glutamine amidotransferase). L-glutamine is bound by residues S51, G245, and G247. A Glutamine amidotransferase type-1 domain is found at 196-388 (KVIVLDCGIK…VDNVCGEQQH (193 aa)). C275 (nucleophile; for GATase activity) is an active-site residue. The L-glutamine site is built by Q279, N317, G319, and F320. Active-site for GATase activity residues include H361 and E363. The tract at residues 391–405 (PMNKSKIIDCPKGIN) is linker. The segment at 406 to 948 (KVLILGSGGL…TNDVNINEKS (543 aa)) is CPSase A. Residues 406-1461 (KVLILGSGGL…MKGPMPIENV (1056 aa)) form a CPSase (Carbamoyl-phosphate synthase) region. Residues R526, R566, G572, G573, K603, E610, G636, I637, H638, Q679, and E693 each contribute to the ATP site. 2 ATP-grasp domains span residues 530-722 (AEKL…KVAL) and 1069-1260 (SRLL…KIII). The Mg(2+) site is built by Q679, E693, and N695. The Mn(2+) site is built by Q679, E693, and N695. The tract at residues 949-1461 (YITLGSGSYR…MKGPMPIENV (513 aa)) is CPSase B. R1105, K1144, I1146, E1151, G1176, V1177, H1178, S1179, Q1219, and E1231 together coordinate ATP. Residues Q1219, E1231, and N1233 each coordinate Mg(2+). Mn(2+) contacts are provided by Q1219, E1231, and N1233. Residues 1324-1470 (FKAPEKNVLL…VDWRTSNKII (147 aa)) form the MGS-like domain. The interval 1463–1797 (WRTSNKIIRL…VRGKVVKVVL (335 aa)) is DHOase (dihydroorotase). Residues H1479 and H1481 each coordinate Zn(2+). 2 residues coordinate (S)-dihydroorotate: R1483 and N1513. Residues K1564, H1599, C1622, H1623, and E1646 each contribute to the Zn(2+) site. K1564 carries the post-translational modification N6-carboxylysine. Position 1670 (R1670) interacts with (S)-dihydroorotate. Residue D1695 participates in Zn(2+) binding. The active-site For DHOase activity is the D1695. 2 residues coordinate (S)-dihydroorotate: H1699 and P1711. The segment at 1798-1916 (RGQIAFIDGK…DTLQTAFNIS (119 aa)) is linker. Residues 1917–2225 (DNSLAGKHIF…LLALVFGAGV (309 aa)) are ATCase (Aspartate transcarbamylase). Residues R1974 and T1975 each coordinate carbamoyl phosphate. Residue K2002 coordinates L-aspartate. 3 residues coordinate carbamoyl phosphate: R2023, H2051, and Q2054. The L-aspartate site is built by R2084 and R2145. The carbamoyl phosphate site is built by L2184 and P2185.

In the N-terminal section; belongs to the CarA family. It in the 2nd section; belongs to the CarB family. This sequence in the 3rd section; belongs to the metallo-dependent hydrolases superfamily. DHOase family. CAD subfamily. The protein in the C-terminal section; belongs to the aspartate/ornithine carbamoyltransferase superfamily. ATCase family. In terms of assembly, homohexamer. The cofactor is Mg(2+). Requires Mn(2+) as cofactor. It depends on Zn(2+) as a cofactor.

It is found in the cytoplasm. It catalyses the reaction hydrogencarbonate + L-glutamine + 2 ATP + H2O = carbamoyl phosphate + L-glutamate + 2 ADP + phosphate + 2 H(+). It carries out the reaction L-glutamine + H2O = L-glutamate + NH4(+). The catalysed reaction is hydrogencarbonate + NH4(+) + 2 ATP = carbamoyl phosphate + 2 ADP + phosphate + 2 H(+). The enzyme catalyses carbamoyl phosphate + L-aspartate = N-carbamoyl-L-aspartate + phosphate + H(+). It catalyses the reaction (S)-dihydroorotate + H2O = N-carbamoyl-L-aspartate + H(+). It functions in the pathway pyrimidine metabolism; UMP biosynthesis via de novo pathway; (S)-dihydroorotate from bicarbonate: step 1/3. Its pathway is pyrimidine metabolism; UMP biosynthesis via de novo pathway; (S)-dihydroorotate from bicarbonate: step 2/3. It participates in pyrimidine metabolism; UMP biosynthesis via de novo pathway; (S)-dihydroorotate from bicarbonate: step 3/3. Allosterically regulated and controlled by phosphorylation. 5-phosphoribose 1-diphosphate is an activator while UMP is an inhibitor of the CPSase reaction. Its function is as follows. Multifunctional protein that encodes the first 3 enzymatic activities of the de novo pyrimidine pathway: carbamoylphosphate synthetase (CPSase; EC 6.3.5.5), aspartate transcarbamylase (ATCase; EC 2.1.3.2) and dihydroorotase (DHOase; EC 3.5.2.3). The CPSase-function is accomplished in 2 steps, by a glutamine-dependent amidotransferase activity (GATase) that binds and cleaves glutamine to produce ammonia, followed by an ammonium-dependent carbamoyl phosphate synthetase, which reacts with the ammonia, hydrogencarbonate and ATP to form carbamoyl phosphate. The endogenously produced carbamoyl phosphate is sequestered and channeled to the ATCase active site. ATCase then catalyzes the formation of carbamoyl-L-aspartate from L-aspartate and carbamoyl phosphate. In the last step, DHOase catalyzes the cyclization of carbamoyl aspartate to dihydroorotate. The chain is Multifunctional protein pyr1-3 (pyr1-3) from Dictyostelium discoideum (Social amoeba).